The sequence spans 88 residues: Small ribosomal subunit protein bS18 (88 aa).

This sequence belongs to the bacterial ribosomal protein bS18 family. As to quaternary structure, part of the 30S ribosomal subunit. Forms a tight heterodimer with protein bS6.

Its function is as follows. Binds as a heterodimer with protein bS6 to the central domain of the 16S rRNA, where it helps stabilize the platform of the 30S subunit. This chain is Small ribosomal subunit protein bS18, found in Aliarcobacter butzleri (strain RM4018) (Arcobacter butzleri).